Here is a 117-residue protein sequence, read N- to C-terminus: uncharacterized protein (117 aa).

The stretch at 5–50 (DKIHNTNEQITALEKKKYQIETTLLEKQRDLLKLETQQNKAKLELL) forms a coiled coil.

This is an uncharacterized protein from Bacillus pumilus (Bacillus mesentericus).